The primary structure comprises 359 residues: Peptide chain release factor 1 (359 aa).

Residue Gln-235 is modified to N5-methylglutamine. Residues 282-306 form a disordered region; that stretch reads RQRADSERSADRKSQVGSGDRSERI.

Belongs to the prokaryotic/mitochondrial release factor family. Methylated by PrmC. Methylation increases the termination efficiency of RF1.

It is found in the cytoplasm. Peptide chain release factor 1 directs the termination of translation in response to the peptide chain termination codons UAG and UAA. This Rhizobium rhizogenes (strain K84 / ATCC BAA-868) (Agrobacterium radiobacter) protein is Peptide chain release factor 1.